The primary structure comprises 397 residues: Elongation factor Tu (397 aa).

Positions 10 to 206 constitute a tr-type G domain; sequence KPHVNIGTIG…AVDASIPEPE (197 aa). Residues 19-26 are G1; it reads GHIDHGKT. 19–26 is a binding site for GTP; the sequence is GHIDHGKT. Residue Thr26 coordinates Mg(2+). A G2 region spans residues 62-66; that stretch reads GITIS. A G3 region spans residues 83 to 86; sequence DCPG. Residues 83 to 87 and 138 to 141 contribute to the GTP site; these read DCPGH and NKAD. The tract at residues 138–141 is G4; that stretch reads NKAD. The G5 stretch occupies residues 176 to 178; it reads SAL.

Belongs to the TRAFAC class translation factor GTPase superfamily. Classic translation factor GTPase family. EF-Tu/EF-1A subfamily. Monomer.

The protein localises to the cytoplasm. The enzyme catalyses GTP + H2O = GDP + phosphate + H(+). GTP hydrolase that promotes the GTP-dependent binding of aminoacyl-tRNA to the A-site of ribosomes during protein biosynthesis. The chain is Elongation factor Tu from Parafrankia sp. (strain EAN1pec).